We begin with the raw amino-acid sequence, 145 residues long: UPF0260 protein VV2402 (145 aa).

Belongs to the UPF0260 family.

The protein is UPF0260 protein VV2402 of Vibrio vulnificus (strain YJ016).